The primary structure comprises 2238 residues: Golgin subfamily A member 4 (2238 aa).

The tract at residues 1 to 90 is disordered; sequence MFKKLKQKIS…QTFAQKLQLR (90 aa). Position 10 is a phosphoserine (Ser10). Residues 12–41 show a composition bias toward low complexity; the sequence is EQQQLQQALAPAQASSSSSTPTRTRSRTSS. The residue at position 39 (Thr39) is a Phosphothreonine. Ser41 is modified (phosphoserine). Composition is skewed to polar residues over residues 52-62 and 73-85; these read NRENASTQATK and SPSQ…TFAQ. Phosphoserine occurs at positions 93 and 100. Disordered stretches follow at residues 132–154, 1695–1744, and 1770–1789; these read AAAF…NSDG, LKER…SQDC, and LEQG…HRAL. The segment at 154–224 is interaction with MACF1; that stretch reads GLSREQLLQR…EELQMDQQAK (71 aa). Residues 156–2161 adopt a coiled-coil conformation; sequence SREQLLQRLR…RYEKNACAAT (2006 aa). Residues 1695–1711 show a composition bias toward basic and acidic residues; it reads LKEREKQVHSLEDKLKN. The region spanning 2178-2225 is the GRIP domain; it reads LFGEPTEFEYLRKVMFEYMMGRETKTMAKVITTVLKFPDDQAQKILER.

In terms of assembly, homodimer. Interacts with GTP-bound ARL1 and ARL3. Interacts with MACF1. Directly interacts with TBC1D23. Interacts with FAM91A1; this interaction may be mediated by TBC1D23. As to expression, ubiquitous. Highly expressed in oligodendrocyte precursors, particularly at a stage just prior to myelination.

It localises to the cytoplasm. The protein localises to the golgi apparatus membrane. It is found in the golgi apparatus. Its subcellular location is the trans-Golgi network membrane. In terms of biological role, involved in vesicular trafficking at the Golgi apparatus level. May play a role in delivery of transport vesicles containing GPI-linked proteins from the trans-Golgi network through its interaction with MACF1. Involved in endosome-to-Golgi trafficking. This is Golgin subfamily A member 4 (Golga4) from Mus musculus (Mouse).